A 499-amino-acid chain; its full sequence is Glucose-6-phosphate isomerase (499 aa).

Residue Glu-352 is the Proton donor of the active site. Active-site residues include His-383 and Lys-487.

The protein belongs to the GPI family.

Its subcellular location is the cytoplasm. It carries out the reaction alpha-D-glucose 6-phosphate = beta-D-fructose 6-phosphate. The protein operates within carbohydrate biosynthesis; gluconeogenesis. It functions in the pathway carbohydrate degradation; glycolysis; D-glyceraldehyde 3-phosphate and glycerone phosphate from D-glucose: step 2/4. Catalyzes the reversible isomerization of glucose-6-phosphate to fructose-6-phosphate. The sequence is that of Glucose-6-phosphate isomerase from Legionella pneumophila (strain Paris).